The primary structure comprises 232 residues: Cytidylate kinase (232 aa).

An ATP-binding site is contributed by 19–27 (GPAGVGKTT).

It belongs to the cytidylate kinase family. Type 1 subfamily.

It is found in the cytoplasm. The enzyme catalyses CMP + ATP = CDP + ADP. The catalysed reaction is dCMP + ATP = dCDP + ADP. The sequence is that of Cytidylate kinase from Nitratidesulfovibrio vulgaris (strain ATCC 29579 / DSM 644 / CCUG 34227 / NCIMB 8303 / VKM B-1760 / Hildenborough) (Desulfovibrio vulgaris).